A 284-amino-acid polypeptide reads, in one-letter code: Shikimate dehydrogenase (NADP(+)) (284 aa).

Shikimate-binding positions include Ser20–Ser22 and Ser67. Lys71 serves as the catalytic Proton acceptor. Position 83 (Asp83) interacts with NADP(+). Shikimate contacts are provided by Asn92 and Asp107. NADP(+) contacts are provided by residues Gly129–Ala133 and Ile227. Tyr229 contacts shikimate. Residue Gly250 coordinates NADP(+).

Belongs to the shikimate dehydrogenase family. In terms of assembly, homodimer.

The enzyme catalyses shikimate + NADP(+) = 3-dehydroshikimate + NADPH + H(+). Its pathway is metabolic intermediate biosynthesis; chorismate biosynthesis; chorismate from D-erythrose 4-phosphate and phosphoenolpyruvate: step 4/7. Functionally, involved in the biosynthesis of the chorismate, which leads to the biosynthesis of aromatic amino acids. Catalyzes the reversible NADPH linked reduction of 3-dehydroshikimate (DHSA) to yield shikimate (SA). The protein is Shikimate dehydrogenase (NADP(+)) of Streptococcus pneumoniae serotype 2 (strain D39 / NCTC 7466).